A 764-amino-acid polypeptide reads, in one-letter code: Mitogen-activated protein kinase kinase kinase 1b (764 aa).

Disordered regions lie at residues 1 to 81, 120 to 260, 325 to 348, and 360 to 392; these read MVEE…IQQQ, KSIA…TATR, PNLAEEAESSAKPESSAIPDSSAM, and VPELSAKPESNAKPESEPEQDSSVEARTEHYGS. The span at 14-30 shows a compositional bias: gly residues; that stretch reads GSWGSGEDGGSSHGGKG. Composition is skewed to low complexity over residues 60-76 and 125-135; these read VHSTSSSGSRRNPLSKS and SQPLSSPSLSQ. The span at 136–145 shows a compositional bias: basic and acidic residues; the sequence is EHGEASHSND. Positions 184 to 201 are enriched in polar residues; it reads YVNSQPQNHYGRKNSPSQ. Residues 431-684 enclose the Protein kinase domain; sequence WFKGDFIGSG…CDMLLTHPFI (254 aa). ATP is bound by residues 437-445 and Lys-459; that span reads IGSGTFGSV. Asp-554 functions as the Proton acceptor in the catalytic mechanism. The interval 706 to 764 is disordered; that stretch reads EERSIDVSESPSIATSSQSGSSPSVAGDAVSPASVAVRPRSMRTLRSEFSMSSPESIAS. Residues 715 to 729 are compositionally biased toward low complexity; it reads SPSIATSSQSGSSPS. Residues 752–764 show a composition bias toward polar residues; the sequence is SEFSMSSPESIAS.

It belongs to the protein kinase superfamily. STE Ser/Thr protein kinase family. MAP kinase kinase kinase subfamily.

The protein localises to the cell membrane. It carries out the reaction L-seryl-[protein] + ATP = O-phospho-L-seryl-[protein] + ADP + H(+). The enzyme catalyses L-threonyl-[protein] + ATP = O-phospho-L-threonyl-[protein] + ADP + H(+). Its function is as follows. The CERK1, MEKK1a/b, MKK1a/b/c and MPK4a/b proteins are involved in pathogen defense. The pathway induces rapid growth inhibition, cell wall depositions and accumulation of defense-related transcripts. This protein is required for responses to chitin and acts redundantly with MEKK1a. In Physcomitrium patens (Spreading-leaved earth moss), this protein is Mitogen-activated protein kinase kinase kinase 1b (MEKK1b).